Consider the following 339-residue polypeptide: MRIAVDGMGGDHSPSAVVEGCVQALEEFKDIEIYITGPEDLLKEAFSKFKYDKERVIFIDAKEVISTNEHPAMAVKKKKDSSLVKALRLVKDNQCEAVISAGSTGAFLTGCTLIVGRIKGVERPALAPVMPGKNGPFMIIDAGANVDSKPSYLVQFAKMGEVYFKSVMDVNNPKVGLVNIGEEEEKGNDLTKATYKLLKEEKDINFIGNVEPREVSTGDVDVLVCDGFVGNTVLKMYEGVASTILSMIKSEVKSSFLAKLGVPFLAPALMNLKKKMDYKEYGGAPFLGVKGICVKAHGSSDAKAFKNAIRQARKFHENDLIGKLSEEITKKSFDNQKKF.

This sequence belongs to the PlsX family. As to quaternary structure, homodimer. Probably interacts with PlsY.

Its subcellular location is the cytoplasm. The enzyme catalyses a fatty acyl-[ACP] + phosphate = an acyl phosphate + holo-[ACP]. It participates in lipid metabolism; phospholipid metabolism. Functionally, catalyzes the reversible formation of acyl-phosphate (acyl-PO(4)) from acyl-[acyl-carrier-protein] (acyl-ACP). This enzyme utilizes acyl-ACP as fatty acyl donor, but not acyl-CoA. This is Phosphate acyltransferase from Clostridium perfringens (strain SM101 / Type A).